A 69-amino-acid chain; its full sequence is Conotoxin AbVIF (69 aa).

The first 17 residues, 1–17 (VLIIAVLFLTACQLTTA), serve as a signal peptide directing secretion. Residues 18-40 (ETSSRGKQKHRALRSTDKNSRMS) constitute a propeptide that is removed on maturation. The disordered stretch occupies residues 20–41 (SSRGKQKHRALRSTDKNSRMSK). Disulfide bonds link Cys-43–Cys-57, Cys-50–Cys-61, and Cys-56–Cys-68.

This sequence belongs to the conotoxin O1 superfamily. As to expression, expressed by the venom duct.

It is found in the secreted. This Conus abbreviatus (Abbreviated cone) protein is Conotoxin AbVIF.